Reading from the N-terminus, the 421-residue chain is Alpha-1-antitrypsin-related protein (421 aa).

The first 21 residues, 1-21 (MPFSVSWGILLLAGLCCLVPS), serve as a signal peptide directing secretion. Asn-56, Asn-110, Asn-148, and Asn-274 each carry an N-linked (GlcNAc...) asparagine glycan.

Belongs to the serpin family. In terms of assembly, interacts with CANX and PDIA3. In terms of processing, glycosylated. In terms of tissue distribution, expressed in the liver, leukocytes and testis. Also detected in brain, colon, uterus, esophagus, spleen, trachea, kidney and lung.

The protein resides in the endoplasmic reticulum. Its function is as follows. Putative serine protease inhibitor. This Homo sapiens (Human) protein is Alpha-1-antitrypsin-related protein (SERPINA2).